A 345-amino-acid polypeptide reads, in one-letter code: Sorting nexin-15 (345 aa).

The region spanning 1–130 is the PX domain; that stretch reads MSRQAKDDFL…EFFRGGEVTR (130 aa). An Omega-N-methylarginine modification is found at Arg-105. Residues 133–163 are disordered; sequence EVSGDLHILPPPLIPTPPPDEPRVQPHETWL. Positions 141–151 are enriched in pro residues; that stretch reads LPPPLIPTPPP. Phosphoserine is present on residues Ser-208 and Ser-234. The disordered stretch occupies residues 226–274; that stretch reads SKEEGAGPSPTHIGELAALEAGSGRPDQEPWEPGGQAEEDDEEGEPAPA. The MIT domain occupies 272–345; sequence APAYLSQATE…AEEILHLHLS (74 aa).

This sequence belongs to the sorting nexin family.

Functionally, may be involved in several stages of intracellular trafficking. Overexpression of SNX15 disrupts the normal trafficking of proteins from the plasma membrane to recycling endosomes or the TGN. The chain is Sorting nexin-15 (SNX15) from Bos taurus (Bovine).